Consider the following 310-residue polypeptide: p-hydroxybenzoic acid efflux pump subunit AaeA (310 aa).

Residues 12 to 32 (AITVVLVILAFIAIFNAWVYY) form a helical membrane-spanning segment.

The protein belongs to the membrane fusion protein (MFP) (TC 8.A.1) family.

It is found in the cell inner membrane. Forms an efflux pump with AaeB. The protein is p-hydroxybenzoic acid efflux pump subunit AaeA of Escherichia coli O17:K52:H18 (strain UMN026 / ExPEC).